A 356-amino-acid polypeptide reads, in one-letter code: Holliday junction branch migration complex subunit RuvB (356 aa).

The interval 4-190 is large ATPase domain (RuvB-L); the sequence is TDKLAAERII…FGIVARLEFY (187 aa). ATP is bound by residues Leu-29, Arg-30, Gly-71, Lys-74, Thr-75, Thr-76, 137–139, Arg-180, Tyr-190, and Arg-227; that span reads EDY. Residue Thr-75 coordinates Mg(2+). A small ATPAse domain (RuvB-S) region spans residues 191–261; that stretch reads DAEQLSRIVR…VADAALAMLD (71 aa). The interval 264 to 356 is head domain (RuvB-H); sequence PVGFDLMDRK…NLWDTPDAER (93 aa). DNA-binding residues include Arg-300, Arg-319, and Arg-324.

It belongs to the RuvB family. In terms of assembly, homohexamer. Forms an RuvA(8)-RuvB(12)-Holliday junction (HJ) complex. HJ DNA is sandwiched between 2 RuvA tetramers; dsDNA enters through RuvA and exits via RuvB. An RuvB hexamer assembles on each DNA strand where it exits the tetramer. Each RuvB hexamer is contacted by two RuvA subunits (via domain III) on 2 adjacent RuvB subunits; this complex drives branch migration. In the full resolvosome a probable DNA-RuvA(4)-RuvB(12)-RuvC(2) complex forms which resolves the HJ.

It localises to the cytoplasm. The catalysed reaction is ATP + H2O = ADP + phosphate + H(+). Functionally, the RuvA-RuvB-RuvC complex processes Holliday junction (HJ) DNA during genetic recombination and DNA repair, while the RuvA-RuvB complex plays an important role in the rescue of blocked DNA replication forks via replication fork reversal (RFR). RuvA specifically binds to HJ cruciform DNA, conferring on it an open structure. The RuvB hexamer acts as an ATP-dependent pump, pulling dsDNA into and through the RuvAB complex. RuvB forms 2 homohexamers on either side of HJ DNA bound by 1 or 2 RuvA tetramers; 4 subunits per hexamer contact DNA at a time. Coordinated motions by a converter formed by DNA-disengaged RuvB subunits stimulates ATP hydrolysis and nucleotide exchange. Immobilization of the converter enables RuvB to convert the ATP-contained energy into a lever motion, pulling 2 nucleotides of DNA out of the RuvA tetramer per ATP hydrolyzed, thus driving DNA branch migration. The RuvB motors rotate together with the DNA substrate, which together with the progressing nucleotide cycle form the mechanistic basis for DNA recombination by continuous HJ branch migration. Branch migration allows RuvC to scan DNA until it finds its consensus sequence, where it cleaves and resolves cruciform DNA. The sequence is that of Holliday junction branch migration complex subunit RuvB from Burkholderia thailandensis (strain ATCC 700388 / DSM 13276 / CCUG 48851 / CIP 106301 / E264).